A 194-amino-acid chain; its full sequence is Crossover junction endodeoxyribonuclease RuvC (194 aa).

Residues Asp8, Glu72, and Asp144 contribute to the active site. Mg(2+)-binding residues include Asp8, Glu72, and Asp144.

The protein belongs to the RuvC family. Homodimer which binds Holliday junction (HJ) DNA. The HJ becomes 2-fold symmetrical on binding to RuvC with unstacked arms; it has a different conformation from HJ DNA in complex with RuvA. In the full resolvosome a probable DNA-RuvA(4)-RuvB(12)-RuvC(2) complex forms which resolves the HJ. Mg(2+) is required as a cofactor.

The protein localises to the cytoplasm. The catalysed reaction is Endonucleolytic cleavage at a junction such as a reciprocal single-stranded crossover between two homologous DNA duplexes (Holliday junction).. Its function is as follows. The RuvA-RuvB-RuvC complex processes Holliday junction (HJ) DNA during genetic recombination and DNA repair. Endonuclease that resolves HJ intermediates. Cleaves cruciform DNA by making single-stranded nicks across the HJ at symmetrical positions within the homologous arms, yielding a 5'-phosphate and a 3'-hydroxyl group; requires a central core of homology in the junction. The consensus cleavage sequence is 5'-(A/T)TT(C/G)-3'. Cleavage occurs on the 3'-side of the TT dinucleotide at the point of strand exchange. HJ branch migration catalyzed by RuvA-RuvB allows RuvC to scan DNA until it finds its consensus sequence, where it cleaves and resolves the cruciform DNA. This chain is Crossover junction endodeoxyribonuclease RuvC, found in Psychrobacter cryohalolentis (strain ATCC BAA-1226 / DSM 17306 / VKM B-2378 / K5).